The following is a 342-amino-acid chain: MKLWKTASRFLPLSFLTLFLTGCLGEENLTALDPKGPQAQWIYDNMILSIIVMALVSIVVFAIFFIILAKYRRKPGDDEIPKQVHGNTALEITWTVIPIILLVILAVPTITGTFMFADKDPDPEVGDNTVYIKVTGHQFWWQFDYENEGFTAGQDVYIPVGEKVIFELHAQDVLHSFWVPALGGKIDTVPGITNHMWLEADEPGVFKGKCAELCGPSHALMDFKLIALERDEYDAWVEGMSAEVEEPTETLANQGRQVFEENSCIGCHAVGGTGTAAGPAFTNFGEREVIAGYLENNDENLEAWIRDPQSLKQGNVMPAYPDMSEEDMEALIAYLRSLKVME.

The first 22 residues, 1-22, serve as a signal peptide directing secretion; it reads MKLWKTASRFLPLSFLTLFLTG. A lipid anchor (N-palmitoyl cysteine) is attached at cysteine 23. Cysteine 23 carries the S-diacylglycerol cysteine lipid modification. The Extracellular segment spans residues 23 to 50; the sequence is CLGEENLTALDPKGPQAQWIYDNMILSI. Positions 23–249 are cytochrome c oxidase subunit II; that stretch reads CLGEENLTAL…MSAEVEEPTE (227 aa). The helical transmembrane segment at 51–69 threads the bilayer; sequence IVMALVSIVVFAIFFIILA. At 70 to 89 the chain is on the cytoplasmic side; sequence KYRRKPGDDEIPKQVHGNTA. The chain crosses the membrane as a helical span at residues 90-108; that stretch reads LEITWTVIPIILLVILAVP. At 109-342 the chain is on the extracellular side; it reads TITGTFMFAD…AYLRSLKVME (234 aa). Histidine 175, cysteine 210, cysteine 214, and histidine 218 together coordinate Cu cation. The Cytochrome c domain occupies 250-342; it reads TLANQGRQVF…AYLRSLKVME (93 aa). Positions 264, 267, 268, and 317 each coordinate heme c.

Belongs to the cytochrome c oxidase subunit 2 family. It depends on Cu cation as a cofactor. Heme c is required as a cofactor.

The protein localises to the cell membrane. It catalyses the reaction 4 Fe(II)-[cytochrome c] + O2 + 8 H(+)(in) = 4 Fe(III)-[cytochrome c] + 2 H2O + 4 H(+)(out). Subunits I and II form the functional core of the enzyme complex. Electrons originating in cytochrome c are transferred via heme a and Cu(A) to the binuclear center formed by heme a3 and Cu(B). This chain is Cytochrome c oxidase subunit 2 (ctaC), found in Alkalihalophilus pseudofirmus (strain ATCC BAA-2126 / JCM 17055 / OF4) (Bacillus pseudofirmus).